The following is a 240-amino-acid chain: Ribosomal RNA small subunit methyltransferase G (240 aa).

S-adenosyl-L-methionine is bound by residues glycine 77, phenylalanine 82, 128 to 129 (AE), and arginine 148. The segment at 217–240 (EKRSKTPKKYPRKAGTPNKSPLLK) is disordered.

This sequence belongs to the methyltransferase superfamily. RNA methyltransferase RsmG family.

The protein resides in the cytoplasm. Its function is as follows. Specifically methylates the N7 position of guanine in position 535 of 16S rRNA. This chain is Ribosomal RNA small subunit methyltransferase G, found in Staphylococcus carnosus (strain TM300).